The primary structure comprises 1299 residues: Cilia- and flagella-associated protein 251 (1299 aa).

Residues 1–351 (MSDTEENPLE…SQKPEDILAQ (351 aa)) form a disordered region. Composition is skewed to acidic residues over residues 17-45 (EMEEEKEEKKEEEEEEEEGEKEKEEEEEE), 91-162 (EKEE…EEDA), and 176-189 (ESQEDGEGLEEWVE). Residues 190–199 (KEEQREGEEV) are compositionally biased toward basic and acidic residues. The span at 212–228 (EEEGWEEEKSGEEEKSE) shows a compositional bias: acidic residues. Basic and acidic residues predominate over residues 229–257 (ESERSKERGGEEEGQEKEEAEHEGEREEG). The segment covering 269–280 (REEEEEEEDTET) has biased composition (acidic residues). Basic and acidic residues-rich tracts occupy residues 281 to 297 (TETKAGRAKEEKKEKQN) and 331 to 351 (NSMKVDDTEEASQKPEDILAQ). WD repeat units lie at residues 484-526 (PVHT…IWKW), 534-574 (ACTL…CWFE), 585-624 (VLTEKTFNKLVGKFSQSVFHLKLPQVLSATKEGKLVVWDI), 643-678 (PRKLVHLQKEAITVLMTIDSYIVTGDIKGNIKFYDH), 681-741 (SVVN…VYHM), 745-785 (GTKL…VWDF), 791-828 (LFSRTFEKGLGVQCLTYNPEGALLGAGFTEGTVYILDA), 838-874 (PFKYSKSSVSHCCFSHDSNYMATADVNFTVAVYMVVV), 881-924 (WEYL…EYNL), 935-975 (LDVH…LFNA), 981-1027 (RKTL…ILPV), 1033-1071 (KTCAIVCHPNGVAGMALSYDGRFAFTAGGQDRSVVQWKI), 1109-1149 (YFYY…FYPS), and 1169-1209 (GKLI…GYTN).

Its subcellular location is the cytoplasm. The protein resides in the cytoskeleton. It localises to the cilium axoneme. The protein localises to the cell projection. It is found in the cilium. Its subcellular location is the flagellum. Involved in spermatozoa motility. May also regulate cilium motility through its role in the assembly of the axonemal radial spokes. This Mus musculus (Mouse) protein is Cilia- and flagella-associated protein 251.